The chain runs to 468 residues: 3-isopropylmalate dehydratase large subunit (468 aa).

[4Fe-4S] cluster contacts are provided by Cys349, Cys409, and Cys412.

Belongs to the aconitase/IPM isomerase family. LeuC type 1 subfamily. In terms of assembly, heterodimer of LeuC and LeuD. [4Fe-4S] cluster is required as a cofactor.

The catalysed reaction is (2R,3S)-3-isopropylmalate = (2S)-2-isopropylmalate. Its pathway is amino-acid biosynthesis; L-leucine biosynthesis; L-leucine from 3-methyl-2-oxobutanoate: step 2/4. Functionally, catalyzes the isomerization between 2-isopropylmalate and 3-isopropylmalate, via the formation of 2-isopropylmaleate. The polypeptide is 3-isopropylmalate dehydratase large subunit (Roseobacter denitrificans (strain ATCC 33942 / OCh 114) (Erythrobacter sp. (strain OCh 114))).